The sequence spans 115 residues: Somatostatin-1 (115 aa).

The signal sequence occupies residues 1-24 (MQSCRVQCALTLLSLALAINSISA). Residues 25 to 99 (APTDPRLRQF…NSSPALAPRE (75 aa)) constitute a propeptide that is removed on maturation. The tract at residues 60–79 (SQTDNEALESDDLPRGAEQD) is disordered. Cys104 and Cys115 are disulfide-bonded.

It belongs to the somatostatin family.

Its subcellular location is the secreted. In terms of biological role, somatostatin inhibits the release of somatotropin. This is Somatostatin-1 (sst1) from Pelophylax ridibundus (Marsh frog).